A 75-amino-acid chain; its full sequence is SPbeta prophage-derived uncharacterized protein YorX (75 aa).

This Bacillus subtilis (strain 168) protein is SPbeta prophage-derived uncharacterized protein YorX (yorX).